The primary structure comprises 415 residues: Diaminopimelate decarboxylase (415 aa).

Position 60 is an N6-(pyridoxal phosphate)lysine (lysine 60). Pyridoxal 5'-phosphate is bound by residues glycine 239 and glutamate 273–arginine 276. Residues arginine 276, arginine 312, and tyrosine 316 each coordinate substrate. The active-site Proton donor is cysteine 342. Positions 343 and 370 each coordinate substrate. Pyridoxal 5'-phosphate is bound at residue tyrosine 370.

This sequence belongs to the Orn/Lys/Arg decarboxylase class-II family. LysA subfamily. Homodimer. Requires pyridoxal 5'-phosphate as cofactor.

It carries out the reaction meso-2,6-diaminopimelate + H(+) = L-lysine + CO2. It participates in amino-acid biosynthesis; L-lysine biosynthesis via DAP pathway; L-lysine from DL-2,6-diaminopimelate: step 1/1. Specifically catalyzes the decarboxylation of meso-diaminopimelate (meso-DAP) to L-lysine. This is Diaminopimelate decarboxylase from Pseudomonas aeruginosa (strain ATCC 15692 / DSM 22644 / CIP 104116 / JCM 14847 / LMG 12228 / 1C / PRS 101 / PAO1).